A 407-amino-acid chain; its full sequence is Phosphopentomutase (407 aa).

Positions 10, 306, 311, 347, 348, and 359 each coordinate Mn(2+).

It belongs to the phosphopentomutase family. The cofactor is Mn(2+).

It is found in the cytoplasm. The catalysed reaction is 2-deoxy-alpha-D-ribose 1-phosphate = 2-deoxy-D-ribose 5-phosphate. The enzyme catalyses alpha-D-ribose 1-phosphate = D-ribose 5-phosphate. It functions in the pathway carbohydrate degradation; 2-deoxy-D-ribose 1-phosphate degradation; D-glyceraldehyde 3-phosphate and acetaldehyde from 2-deoxy-alpha-D-ribose 1-phosphate: step 1/2. Isomerase that catalyzes the conversion of deoxy-ribose 1-phosphate (dRib-1-P) and ribose 1-phosphate (Rib-1-P) to deoxy-ribose 5-phosphate (dRib-5-P) and ribose 5-phosphate (Rib-5-P), respectively. This Escherichia coli O127:H6 (strain E2348/69 / EPEC) protein is Phosphopentomutase.